The following is a 691-amino-acid chain: 1-butanol dehydrogenase (cytochrome c) (691 aa).

A signal peptide spans 1–38 (MLTTTFARKREESVPLRKGIQRALLGLSCLVLSTTSFA). Glu-84 is a pyrroloquinoline quinone binding site. A disulfide bond links Cys-130 and Cys-131. Residues Arg-136, Thr-181, and 197–198 (GA) contribute to the pyrroloquinoline quinone site. Ca(2+)-binding residues include Glu-199 and Asp-322. Asp-322 functions as the Proton acceptor in the catalytic mechanism. Pyrroloquinoline quinone is bound by residues Lys-349, 408-409 (NW), and Val-558. Residues 605-684 (DDVAEGTGLY…KIKAFILGTA (80 aa)) enclose the Cytochrome c domain. Heme c-binding residues include Cys-618, Cys-621, His-622, and Met-661.

This sequence belongs to the bacterial PQQ dehydrogenase family. Monomer. Pyrroloquinoline quinone is required as a cofactor. The cofactor is Ca(2+). Requires heme c as cofactor.

It localises to the periplasm. The enzyme catalyses butan-1-ol + 2 Fe(III)-[cytochrome c] = butanal + 2 Fe(II)-[cytochrome c] + 2 H(+). Dehydrogenase activity is increased by ammonium ions. Its function is as follows. Involved in the metabolism of butane. Could be important in the detoxification of 1-butanol. Catalyzes the oxidation of 1-butanol to butyraldehyde. Also able to use 1-propanol, 2-pentanol, propionaldehyde and butyraldehyde as substrates. The protein is 1-butanol dehydrogenase (cytochrome c) of Thauera butanivorans (strain ATCC 43655 / DSM 2080 / JCM 20651 / CCUG 51053 / NBRC 103042 / IAM 12574 / Bu B1211) (Pseudomonas butanovora).